A 73-amino-acid polypeptide reads, in one-letter code: UPF0499 protein CHGG_06021 (73 aa).

Positions Met1 to Ala20 are cleaved as a signal peptide. Disulfide bonds link Cys41/Cys55, Cys48/Cys60, and Cys54/Cys69.

It belongs to the UPF0499 family.

The protein resides in the secreted. This chain is UPF0499 protein CHGG_06021, found in Chaetomium globosum (strain ATCC 6205 / CBS 148.51 / DSM 1962 / NBRC 6347 / NRRL 1970) (Soil fungus).